Consider the following 153-residue polypeptide: SsrA-binding protein (153 aa).

Belongs to the SmpB family.

It is found in the cytoplasm. Required for rescue of stalled ribosomes mediated by trans-translation. Binds to transfer-messenger RNA (tmRNA), required for stable association of tmRNA with ribosomes. tmRNA and SmpB together mimic tRNA shape, replacing the anticodon stem-loop with SmpB. tmRNA is encoded by the ssrA gene; the 2 termini fold to resemble tRNA(Ala) and it encodes a 'tag peptide', a short internal open reading frame. During trans-translation Ala-aminoacylated tmRNA acts like a tRNA, entering the A-site of stalled ribosomes, displacing the stalled mRNA. The ribosome then switches to translate the ORF on the tmRNA; the nascent peptide is terminated with the 'tag peptide' encoded by the tmRNA and targeted for degradation. The ribosome is freed to recommence translation, which seems to be the essential function of trans-translation. This is SsrA-binding protein from Desulforudis audaxviator (strain MP104C).